Consider the following 162-residue polypeptide: CASP-like protein 1C1 (162 aa).

The Cytoplasmic portion of the chain corresponds to 1 to 7 (MAKLHRL). Residues 8-28 (ISAVLRLAAAGAAAAAAIIMV) form a helical membrane-spanning segment. The Extracellular portion of the chain corresponds to 29-50 (TSHETTSFFGIEMEAKYSYTPS). Residues 51–71 (FVFFVVAFAVAFAYSLLALLA) traverse the membrane as a helical segment. Topologically, residues 72–79 (RPGSTASR) are cytoplasmic. A helical transmembrane segment spans residues 80–100 (LLLLSDVMVGMLLTGAVAATG). Over 101–128 (AISQVGKSGNEHAGWLPICAQVQAYCSH) the chain is Extracellular. Residues 129–149 (VMGALIAGFVSLLLYFLIIMY) traverse the membrane as a helical segment. The Cytoplasmic portion of the chain corresponds to 150 to 162 (SLHAVAEPLCSCH).

Belongs to the Casparian strip membrane proteins (CASP) family. In terms of assembly, homodimer and heterodimers.

The protein localises to the cell membrane. The protein is CASP-like protein 1C1 of Sorghum bicolor (Sorghum).